Here is a 702-residue protein sequence, read N- to C-terminus: Penicillin-binding protein activator LpoA (702 aa).

A signal peptide spans 1-26; the sequence is MVPSTFLRSKPARCLPVLLATLIFAG. Cys27 is lipidated: N-palmitoyl cysteine. A lipid anchor (S-diacylglycerol cysteine) is attached at Cys27. Positions 327–378 are disordered; sequence GSRADPVQAPTQDQAAPAAEPAAQAPATSTTPQTTASPATQPVTAPAAQPQP. The span at 330-378 shows a compositional bias: low complexity; sequence ADPVQAPTQDQAAPAAEPAAQAPATSTTPQTTASPATQPVTAPAAQPQP.

The protein belongs to the LpoA family. Interacts with PBP1a.

The protein localises to the cell outer membrane. Regulator of peptidoglycan synthesis that is essential for the function of penicillin-binding protein 1A (PBP1a). The protein is Penicillin-binding protein activator LpoA of Klebsiella pneumoniae subsp. pneumoniae (strain ATCC 700721 / MGH 78578).